Here is a 131-residue protein sequence, read N- to C-terminus: uncharacterized protein (131 aa).

Positions 31-40 (AAATSRAAPL) are enriched in low complexity. The interval 31–131 (AAATSRAAPL…EAKTEQTKTP (101 aa)) is disordered.

This is an uncharacterized protein from Homo sapiens (Human).